Reading from the N-terminus, the 422-residue chain is Serine hydroxymethyltransferase (422 aa).

A (6S)-5,6,7,8-tetrahydrofolate-binding site is contributed by 121 to 123; sequence GHI. Position 227 is an N6-(pyridoxal phosphate)lysine (Lys-227). Residue Glu-245 participates in (6S)-5,6,7,8-tetrahydrofolate binding.

Belongs to the SHMT family. In terms of assembly, homodimer. It depends on pyridoxal 5'-phosphate as a cofactor.

It localises to the cytoplasm. It catalyses the reaction 5,10-methylenetetrahydromethanopterin + glycine + H2O = 5,6,7,8-tetrahydromethanopterin + L-serine. Its pathway is amino-acid biosynthesis; glycine biosynthesis; glycine from L-serine: step 1/1. Its function is as follows. Catalyzes the reversible interconversion of serine and glycine with tetrahydromethanopterin (H4MPT) serving as the one-carbon carrier. Also exhibits a pteridine-independent aldolase activity toward beta-hydroxyamino acids, producing glycine and aldehydes, via a retro-aldol mechanism. The chain is Serine hydroxymethyltransferase from Methanobrevibacter smithii (strain ATCC 35061 / DSM 861 / OCM 144 / PS).